The primary structure comprises 286 residues: Expansin-like protein 1 (286 aa).

A signal peptide spans 1 to 21 (MKTFVLFVILLCLTFLSISKS). Residues 22–265 (ETCPFSQSLV…TGASIGTPSD (244 aa)) are Extracellular-facing. Residues 44-145 (AGNCGYENLM…YKVPCGVNGN (102 aa)) form the Expansin-like EG45 domain. Intrachain disulfides connect cysteine 47-cysteine 77 and cysteine 80-cysteine 140. 2 N-linked (GlcNAc...) asparagine glycosylation sites follow: asparagine 82 and asparagine 89. A helical transmembrane segment spans residues 266 to 286 (ASSLTLYALFSLTILFLVMLN).

It belongs to the expansin family. Expansin A subfamily.

It is found in the membrane. Functionally, may serve to lubricate the movement of the cellulose microfibrils during cell growth and wall extension and/or they may serve to maintain the fluid state of the slug cell wall. In Dictyostelium discoideum (Social amoeba), this protein is Expansin-like protein 1 (expl1).